The following is a 300-amino-acid chain: Ribosomal RNA small subunit methyltransferase H (300 aa).

S-adenosyl-L-methionine contacts are provided by residues 33–35 (GGH), Asp-53, Phe-78, Asp-97, and Gln-104.

It belongs to the methyltransferase superfamily. RsmH family.

The protein resides in the cytoplasm. It carries out the reaction cytidine(1402) in 16S rRNA + S-adenosyl-L-methionine = N(4)-methylcytidine(1402) in 16S rRNA + S-adenosyl-L-homocysteine + H(+). In terms of biological role, specifically methylates the N4 position of cytidine in position 1402 (C1402) of 16S rRNA. The polypeptide is Ribosomal RNA small subunit methyltransferase H (Karelsulcia muelleri (strain GWSS) (Sulcia muelleri)).